The sequence spans 213 residues: Holliday junction branch migration complex subunit RuvA (213 aa).

The domain I stretch occupies residues 1–69 (MISYLKGIVA…EEIPLLYGFS (69 aa)). The segment at 70–148 (SPAERDLFRH…EWRKSAGFFV (79 aa)) is domain II. The tract at residues 149-158 (ATEGPAPGIL) is flexible linker. Positions 158-213 (LEEVQMTLFALGYTAHEVSHALHVVSEDIGLPKDAYVEDWIKQAIAHLSSSEQVSH) are domain III.

Belongs to the RuvA family. In terms of assembly, homotetramer. Forms an RuvA(8)-RuvB(12)-Holliday junction (HJ) complex. HJ DNA is sandwiched between 2 RuvA tetramers; dsDNA enters through RuvA and exits via RuvB. An RuvB hexamer assembles on each DNA strand where it exits the tetramer. Each RuvB hexamer is contacted by two RuvA subunits (via domain III) on 2 adjacent RuvB subunits; this complex drives branch migration. In the full resolvosome a probable DNA-RuvA(4)-RuvB(12)-RuvC(2) complex forms which resolves the HJ.

The protein resides in the cytoplasm. Its function is as follows. The RuvA-RuvB-RuvC complex processes Holliday junction (HJ) DNA during genetic recombination and DNA repair, while the RuvA-RuvB complex plays an important role in the rescue of blocked DNA replication forks via replication fork reversal (RFR). RuvA specifically binds to HJ cruciform DNA, conferring on it an open structure. The RuvB hexamer acts as an ATP-dependent pump, pulling dsDNA into and through the RuvAB complex. HJ branch migration allows RuvC to scan DNA until it finds its consensus sequence, where it cleaves and resolves the cruciform DNA. This chain is Holliday junction branch migration complex subunit RuvA, found in Nostoc sp. (strain PCC 7120 / SAG 25.82 / UTEX 2576).